The primary structure comprises 493 residues: Glutamate--tRNA ligase (493 aa).

Residues P9–S19 carry the 'HIGH' region motif. Positions K258–R262 match the 'KMSKS' region motif. K261 provides a ligand contact to ATP.

It belongs to the class-I aminoacyl-tRNA synthetase family. Glutamate--tRNA ligase type 1 subfamily. As to quaternary structure, monomer.

The protein localises to the cytoplasm. The catalysed reaction is tRNA(Glu) + L-glutamate + ATP = L-glutamyl-tRNA(Glu) + AMP + diphosphate. In terms of biological role, catalyzes the attachment of glutamate to tRNA(Glu) in a two-step reaction: glutamate is first activated by ATP to form Glu-AMP and then transferred to the acceptor end of tRNA(Glu). This Clostridioides difficile (strain 630) (Peptoclostridium difficile) protein is Glutamate--tRNA ligase.